We begin with the raw amino-acid sequence, 248 residues long: Small ribosomal subunit protein uS3 (248 aa).

The KH type-2 domain maps to 38–106; sequence IREYLEKGLD…MVALNILEVK (69 aa). The segment at 214-248 is disordered; sequence SELNAPAQGRGRGDRNGRPRRGGQRRQRAQQKQEG. Positions 231-242 are enriched in basic residues; that stretch reads RPRRGGQRRQRA.

Belongs to the universal ribosomal protein uS3 family. Part of the 30S ribosomal subunit. Forms a tight complex with proteins S10 and S14.

In terms of biological role, binds the lower part of the 30S subunit head. Binds mRNA in the 70S ribosome, positioning it for translation. In Corynebacterium aurimucosum (strain ATCC 700975 / DSM 44827 / CIP 107346 / CN-1) (Corynebacterium nigricans), this protein is Small ribosomal subunit protein uS3.